A 424-amino-acid polypeptide reads, in one-letter code: MSAKQVSKDEEKEALNLFLSTQTIIKEALRKLGYPGDMYELMKEPQRMLTVRIPVKMDNGSVKVFTGYRSQHNDAVGPTKGGVRFHPEVNEEEVKALSIWMTLKCGIANLPYGGGKGGIICDPRTMSFGELERLSRGYVRAISQIVGPTKDIPAPDVYTNSQIMAWMMDEYSRLREFDSPGFITGKPLVLGGSQGRETATAQGVTICIEEAVKKKGIKLQNARIIIQGFGNAGSFLAKFMHDAGAKVIGISDANGGLYNPDGLDIPYLLDKRDSFGMVTNLFTDVITNEELLEKDCDILVPAAISNQITAKNAHNIQASIVVEAANGPTTIDATKILNERGVLLVPDILASAGGVTVSYFEWVQNNQGYYWSEEEVAEKLRSVMVSSFETIYQTAATHKVDMRLAAYMTGIRKSAEASRFRGWV.

Substrate-binding residues include Lys-80 and Lys-104. The active-site Proton donor is Lys-116. NAD(+)-binding residues include Thr-200 and Asn-231. Ser-358 provides a ligand contact to substrate.

The protein belongs to the Glu/Leu/Phe/Val dehydrogenases family. In terms of assembly, homohexamer. Interacts with transcriptional regulator GltC.

It carries out the reaction L-glutamate + NAD(+) + H2O = 2-oxoglutarate + NH4(+) + NADH + H(+). In terms of biological role, devoted to catabolic function of glutamate (and other amino acids of the glutamate family) utilization as sole nitrogen source. It is not involved in anabolic function of glutamate biosynthesis since B.subtilis possesses only one route of glutamate biosynthesis from ammonia, catalyzed by glutamate synthase. Wild-type cells are unable to utilize glutamate or glutamine as a sole carbon source; thus RocG does not function physiologically to synthesize glutamate, but it is involved in the utilization of arginine, and proline as carbon or nitrogen source. The catabolic RocG is essential for controlling gltAB expression via an inhibitory interactions with the transcriptional regulator GltC in response to the availability of sugars. The sequence is that of Catabolic NAD-specific glutamate dehydrogenase RocG from Bacillus subtilis (strain 168).